The sequence spans 763 residues: Phosphoglycerol transferase I (763 aa).

The next 4 membrane-spanning stretches (helical) occupy residues 1-21 (MSELLSIALFLASVLIYAWKA), 26-46 (WWFAAILAVLGLFVVLNITLY), 77-97 (ILPGAGIVLALAAVFSALGWV), and 108-128 (FGYSLLALLLALGSVDASPAF).

It belongs to the OpgB family.

It localises to the cell inner membrane. It catalyses the reaction a phosphatidylglycerol + a membrane-derived-oligosaccharide D-glucose = a 1,2-diacyl-sn-glycerol + a membrane-derived-oligosaccharide 6-(glycerophospho)-D-glucose.. The protein operates within glycan metabolism; osmoregulated periplasmic glucan (OPG) biosynthesis. Transfers a phosphoglycerol residue from phosphatidylglycerol to the membrane-bound nascent glucan backbones. This is Phosphoglycerol transferase I from Citrobacter koseri (strain ATCC BAA-895 / CDC 4225-83 / SGSC4696).